The chain runs to 79 residues: D-alanyl carrier protein (79 aa).

A Carrier domain is found at 1-77 (MDTKQAVLDI…KIIAKVESLR (77 aa)). Serine 35 is modified (O-(pantetheine 4'-phosphoryl)serine).

The protein belongs to the DltC family. Post-translationally, 4'-phosphopantetheine is transferred from CoA to a specific serine of apo-DCP.

It is found in the cytoplasm. Its pathway is cell wall biogenesis; lipoteichoic acid biosynthesis. Its function is as follows. Carrier protein involved in the D-alanylation of lipoteichoic acid (LTA). The loading of thioester-linked D-alanine onto DltC is catalyzed by D-alanine--D-alanyl carrier protein ligase DltA. The DltC-carried D-alanyl group is further transferred to cell membrane phosphatidylglycerol (PG) by forming an ester bond, probably catalyzed by DltD. D-alanylation of LTA plays an important role in modulating the properties of the cell wall in Gram-positive bacteria, influencing the net charge of the cell wall. In Lactobacillus johnsonii (strain CNCM I-12250 / La1 / NCC 533), this protein is D-alanyl carrier protein.